The chain runs to 365 residues: Peptide chain release factor 2 (365 aa).

Q251 bears the N5-methylglutamine mark.

The protein belongs to the prokaryotic/mitochondrial release factor family. Methylated by PrmC. Methylation increases the termination efficiency of RF2.

The protein resides in the cytoplasm. In terms of biological role, peptide chain release factor 2 directs the termination of translation in response to the peptide chain termination codons UGA and UAA. The chain is Peptide chain release factor 2 from Campylobacter jejuni subsp. jejuni serotype O:6 (strain 81116 / NCTC 11828).